We begin with the raw amino-acid sequence, 429 residues long: GTPase Obg (429 aa).

In terms of domain architecture, Obg spans methionine 1–isoleucine 158. The 175-residue stretch at alanine 159 to lysine 333 folds into the OBG-type G domain. GTP-binding positions include glycine 165–serine 172, phenylalanine 190–asparagine 194, aspartate 212–glycine 215, asparagine 282–aspartate 285, and serine 314–valine 316. Mg(2+) is bound by residues serine 172 and threonine 192. In terms of domain architecture, OCT spans glutamate 350 to lysine 429.

Belongs to the TRAFAC class OBG-HflX-like GTPase superfamily. OBG GTPase family. As to quaternary structure, monomer. It depends on Mg(2+) as a cofactor.

Its subcellular location is the cytoplasm. Its function is as follows. An essential GTPase which binds GTP, GDP and possibly (p)ppGpp with moderate affinity, with high nucleotide exchange rates and a fairly low GTP hydrolysis rate. Plays a role in control of the cell cycle, stress response, ribosome biogenesis and in those bacteria that undergo differentiation, in morphogenesis control. This is GTPase Obg from Lachnoclostridium phytofermentans (strain ATCC 700394 / DSM 18823 / ISDg) (Clostridium phytofermentans).